A 1146-amino-acid chain; its full sequence is Large proline-rich protein BAG6 (1146 aa).

Met1 carries the N-acetylmethionine modification. One can recognise a Ubiquitin-like domain in the interval Leu17–Thr92. 5 disordered regions span residues Arg87–Asn128, Arg186–Pro268, Thr381–Pro436, Gln457–Gly525, and Pro555–Asp618. Ser96 is subject to Phosphoserine. Low complexity predominate over residues Ser96–Thr108. The segment covering His109–Ala122 has biased composition (gly residues). Thr117 is modified (phosphothreonine). Positions Val208 to Pro217 are enriched in polar residues. 2 repeat units span residues Arg236–His265 and Pro410–Val438. The interval Arg236–Val650 is 4 X 29 AA approximate repeats. A compositionally biased stretch (pro residues) spans Thr239–Ala257. Residues Gly394 to Ala413 show a composition bias toward low complexity. Pro residues-rich tracts occupy residues Ala422–Thr433 and Pro502–Pro515. 2 stretches are compositionally biased toward low complexity: residues Pro555–Pro573 and Pro583–Pro601. 2 tandem repeats follow at residues Ser589 to Ala616 and Ser622 to Val650. Pro residues predominate over residues Pro603–Pro614. Disordered regions lie at residues Ala666–Pro711 and Pro961–Pro1146. The segment covering Ala670–Ser694 has biased composition (pro residues). Basic and acidic residues predominate over residues Thr977 to Ala986. A phosphoserine mark is found at Ser978 and Ser987. Over residues Ala1021 to Pro1034 the composition is skewed to low complexity. A required for interaction with GET4 region spans residues Trp1024–Asp1054. A Nuclear localization site motif is present at residues Ala1026 to Met1068. The segment at Ile1036–Pro1146 is sufficient for the delivery of client proteins to the endoplasmic reticulum. Thr1067 carries the post-translational modification Phosphothreonine. The interval Gly1072–Asn1129 is BAG-similar domain, required and sufficient for interaction with UBL4A. The segment covering Ala1080–Ala1090 has biased composition (low complexity). Phosphoserine is present on residues Ser1095 and Ser1131.

As to quaternary structure, component of the BAG6/BAT3 complex, also named BAT3 complex, at least composed of BAG6, UBL4A and GET4/TRC35. Interacts with GET4; the interaction is direct and localizes BAG6 in the cytosol. Interacts with UBL4A; the interaction is direct and required for UBL4A protein stability. Interacts with AIFM1. Interacts with HSPA2. Interacts with CTCFL. Interacts with p300/EP300. Interacts (via ubiquitin-like domain) with RNF126; required for BAG6-dependent ubiquitination of proteins mislocalized to the cytosol. Interacts (via ubiquitin-like domain) with SGTA; SGTA competes with RNF126 by binding the same region of BAG6, thereby promoting deubiquitination of BAG6-target proteins and rescuing them from degradation. Interacts with ricin A chain. Interacts with VCP and AMFR; both form the VCP/p97-AMFR/gp78 complex. Interacts with SYVN1. Interacts with USP13; the interaction is direct and may mediate UBL4A deubiquitination. Interacts with ZFAND2B. Interacts with KPNA2. Interacts with UBQLN4. Ricin can induce a cleavage by the caspase CASP3. The released C-terminal peptide induces apoptosis.

It localises to the cytoplasm. Its subcellular location is the cytosol. The protein localises to the nucleus. It is found in the secreted. The protein resides in the extracellular exosome. ATP-independent molecular chaperone preventing the aggregation of misfolded and hydrophobic patches-containing proteins. Functions as part of a cytosolic protein quality control complex, the BAG6/BAT3 complex, which maintains these client proteins in a soluble state and participates in their proper delivery to the endoplasmic reticulum or alternatively can promote their sorting to the proteasome where they undergo degradation. The BAG6/BAT3 complex is involved in the post-translational delivery of tail-anchored/type II transmembrane proteins to the endoplasmic reticulum membrane. Recruited to ribosomes, it interacts with the transmembrane region of newly synthesized tail-anchored proteins and together with SGTA and ASNA1 mediates their delivery to the endoplasmic reticulum. Client proteins that cannot be properly delivered to the endoplasmic reticulum are ubiquitinated by RNF126, an E3 ubiquitin-protein ligase associated with BAG6 and are sorted to the proteasome. SGTA which prevents the recruitment of RNF126 to BAG6 may negatively regulate the ubiquitination and the proteasomal degradation of client proteins. Similarly, the BAG6/BAT3 complex also functions as a sorting platform for proteins of the secretory pathway that are mislocalized to the cytosol either delivering them to the proteasome for degradation or to the endoplasmic reticulum. The BAG6/BAT3 complex also plays a role in the endoplasmic reticulum-associated degradation (ERAD), a quality control mechanism that eliminates unwanted proteins of the endoplasmic reticulum through their retrotranslocation to the cytosol and their targeting to the proteasome. It maintains these retrotranslocated proteins in an unfolded yet soluble state condition in the cytosol to ensure their proper delivery to the proteasome. BAG6 is also required for selective ubiquitin-mediated degradation of defective nascent chain polypeptides by the proteasome. In this context, it may participate in the production of antigenic peptides and play a role in antigen presentation in immune response. BAG6 is also involved in endoplasmic reticulum stress-induced pre-emptive quality control, a mechanism that selectively attenuates the translocation of newly synthesized proteins into the endoplasmic reticulum and reroutes them to the cytosol for proteasomal degradation. BAG6 may ensure the proper degradation of these proteins and thereby protects the endoplasmic reticulum from protein overload upon stress. By inhibiting the polyubiquitination and subsequent proteasomal degradation of HSPA2 it may also play a role in the assembly of the synaptonemal complex during spermatogenesis. Also positively regulates apoptosis by interacting with and stabilizing the proapoptotic factor AIFM1. By controlling the steady-state expression of the IGF1R receptor, indirectly regulates the insulin-like growth factor receptor signaling pathway. Its function is as follows. Involved in DNA damage-induced apoptosis: following DNA damage, accumulates in the nucleus and forms a complex with p300/EP300, enhancing p300/EP300-mediated p53/TP53 acetylation leading to increase p53/TP53 transcriptional activity. When nuclear, may also act as a component of some chromatin regulator complex that regulates histone 3 'Lys-4' dimethylation (H3K4me2). In terms of biological role, released extracellularly via exosomes, it is a ligand of the natural killer/NK cells receptor NCR3 and stimulates NK cells cytotoxicity. It may thereby trigger NK cells cytotoxicity against neighboring tumor cells and immature myeloid dendritic cells (DC). Functionally, may mediate ricin-induced apoptosis. The sequence is that of Large proline-rich protein BAG6 from Rattus norvegicus (Rat).